The following is a 404-amino-acid chain: F-box only protein 12 (404 aa).

The F-box domain maps to 1–44 (MKNSIPIDLIYEILSRLPAKSVARCRCVSKRWRSILRHQVFTEL). A helical transmembrane segment spans residues 383-403 (LAILFCLFFLLFNYLIRLCWV).

It is found in the membrane. The sequence is that of F-box only protein 12 (FBX12) from Arabidopsis thaliana (Mouse-ear cress).